The following is a 74-amino-acid chain: Small ribosomal subunit protein bS18 (74 aa).

The protein belongs to the bacterial ribosomal protein bS18 family. In terms of assembly, part of the 30S ribosomal subunit. Forms a tight heterodimer with protein bS6.

Binds as a heterodimer with protein bS6 to the central domain of the 16S rRNA, where it helps stabilize the platform of the 30S subunit. The polypeptide is Small ribosomal subunit protein bS18 (Natranaerobius thermophilus (strain ATCC BAA-1301 / DSM 18059 / JW/NM-WN-LF)).